Reading from the N-terminus, the 21-residue chain is Bibrotoxin (21 aa).

Intrachain disulfides connect C1–C15 and C3–C11.

Belongs to the endothelin/sarafotoxin family. Expressed by the venom gland.

It is found in the secreted. Vasoconstrictor activity. These toxins cause cardiac arrest probably as a result of coronary vasospasm. May act by displaying agonistic activities towards endothelin-1 and -2 receptors (EDNRA and EDNRB). The protein is Bibrotoxin of Atractaspis bibronii (Bibron's mole viper).